The primary structure comprises 593 residues: V-type sodium ATPase catalytic subunit A (593 aa).

Residue 232 to 239 coordinates ATP; sequence GPFGAGKT.

It belongs to the ATPase alpha/beta chains family.

The catalysed reaction is 4 Na(+)(in) + ATP + H2O = 4 Na(+)(out) + ADP + phosphate + H(+). Functionally, involved in ATP-driven sodium extrusion. This Enterococcus hirae (strain ATCC 9790 / DSM 20160 / JCM 8729 / LMG 6399 / NBRC 3181 / NCIMB 6459 / NCDO 1258 / NCTC 12367 / WDCM 00089 / R) protein is V-type sodium ATPase catalytic subunit A (ntpA).